The following is a 202-amino-acid chain: MKVRAQVPTVKNATNFNMVADSKTAVGSTLENLKAAIAGETGAHAKYTAFAKAAREQGYEQIARLFEATAAAELIHIGLEYALVAEMEPGYEKPTVAAPSAYSCDLNLISGANGEIYETSDMYPAFIRKAQEEGNSKAVHVFTRAKLAESVHAERYLAAYNDIDAPDDDKFHLCPICGYIHKGEDFEKCPICFRPKDTFTAY.

The Ferritin-like diiron domain maps to 23-168; that stretch reads KTAVGSTLEN…AYNDIDAPDD (146 aa). 10 residues coordinate Fe cation: E40, E73, E115, E118, E149, H152, C174, C177, C189, and C192. The 34-residue stretch at 169–202 folds into the Rubredoxin-like domain; it reads DKFHLCPICGYIHKGEDFEKCPICFRPKDTFTAY.

Homodimer. May possess two rubredoxin-like centers and two hemerythrin-like binuclear-iron centers per dimer.

The protein resides in the cytoplasm. Exhibits NADH peroxidase activity (in vitro). In Nitratidesulfovibrio vulgaris (strain ATCC 29579 / DSM 644 / CCUG 34227 / NCIMB 8303 / VKM B-1760 / Hildenborough) (Desulfovibrio vulgaris), this protein is Nigerythrin (ngr).